The following is a 194-amino-acid chain: Ion-translocating oxidoreductase complex subunit A (194 aa).

Transmembrane regions (helical) follow at residues methionine 1–valine 21, cysteine 48–phenylalanine 68, leucine 73–valine 93, leucine 103–methionine 123, valine 135–isoleucine 155, and proline 172–isoleucine 192.

Belongs to the NqrDE/RnfAE family. The complex is composed of six subunits: RnfA, RnfB, RnfC, RnfD, RnfE and RnfG.

The protein resides in the cell inner membrane. Its function is as follows. Part of a membrane-bound complex that couples electron transfer with translocation of ions across the membrane. This chain is Ion-translocating oxidoreductase complex subunit A, found in Buchnera aphidicola subsp. Baizongia pistaciae (strain Bp).